The chain runs to 255 residues: Ribonuclease HII (255 aa).

The region spanning 72–255 is the RNase H type-2 domain; sequence NYIAGVDEAG…RLSFVKNFVE (184 aa). Positions 78, 79, and 170 each coordinate a divalent metal cation.

The protein belongs to the RNase HII family. Mn(2+) serves as cofactor. It depends on Mg(2+) as a cofactor.

It is found in the cytoplasm. The enzyme catalyses Endonucleolytic cleavage to 5'-phosphomonoester.. Its function is as follows. Endonuclease that specifically degrades the RNA of RNA-DNA hybrids. The polypeptide is Ribonuclease HII (Ruminiclostridium cellulolyticum (strain ATCC 35319 / DSM 5812 / JCM 6584 / H10) (Clostridium cellulolyticum)).